Here is a 315-residue protein sequence, read N- to C-terminus: BTB/POZ domain-containing adapter for CUL3-mediated RhoA degradation protein 3 (315 aa).

An N-acetylmethionine modification is found at methionine 1. Serine 23 carries the phosphoserine modification. The BTB domain maps to 32-100 (KYVKLNVGGA…LRDGAVPLPE (69 aa)). An Interaction with PCNA motif is present at residues 239–245 (QTKVEFP). Residues 269 to 294 (NALLEATGGAAGRSHHLDEDEERERE) form a disordered region.

Belongs to the BACURD family. In terms of assembly, homotetramer; forms a two-fold symmetric tetramer in solution. Interacts with CUL3; interaction is direct and forms a 5:5 heterodecamer. Component of the BCR(BACURD3) E3 ubiquitin ligase complex, at least composed of CUL3, KCTD10/BACURD3 and RBX1. Interacts with DNA polymerase delta subunit 2/POLD2. Interacts with PCNA. As to expression, expressed at highest levels in lung. Also detected in testis and heart. Very low expression, if any, in brain, liver, spleen, kidney and skeletal muscle.

Its subcellular location is the nucleus. It participates in protein modification; protein ubiquitination. Functionally, substrate-specific adapter of a BCR (BTB-CUL3-RBX1) E3 ubiquitin-protein ligase complex. The BCR(BACURD3) E3 ubiquitin ligase complex mediates the ubiquitination of target proteins, leading to their degradation by the proteasome. In Rattus norvegicus (Rat), this protein is BTB/POZ domain-containing adapter for CUL3-mediated RhoA degradation protein 3 (Kctd10).